Consider the following 337-residue polypeptide: MTQPIARSIPLQVVSGDTAAPAPLQTGVKQIGGDKINRSPVQFVDAPVLRKPSWIRVRIPSGNAVQNLKAKLRENRLVTVCEEASCPNIHECFSHGTATFMILGEVCTRRCSFCDVAHGRPKPPDASEPASLAATVADMGLKYVVVTSVDRDDLRDGGAQHFVDCISAIRTSSPNTRIEILTPDFRGKGRMDRALEILALSPPDVFNHNIETVPDLYPNVRPGADYQWSLTLLQRFKAQHPSIATKSGIMLGLGETMEQVQATLRDLRAHDVDMITIGQYLQPTPHHHPVMRYWTPEEYKALEDYGNALGFSHVASGPMVRSSYHADRQAAGAGVAA.

Positions 81, 86, 92, 107, 111, 114, and 323 each coordinate [4Fe-4S] cluster. The Radical SAM core domain occupies 93 to 312 (FSHGTATFMI…EDYGNALGFS (220 aa)).

Belongs to the radical SAM superfamily. Lipoyl synthase family. It depends on [4Fe-4S] cluster as a cofactor.

The protein localises to the cytoplasm. It carries out the reaction [[Fe-S] cluster scaffold protein carrying a second [4Fe-4S](2+) cluster] + N(6)-octanoyl-L-lysyl-[protein] + 2 oxidized [2Fe-2S]-[ferredoxin] + 2 S-adenosyl-L-methionine + 4 H(+) = [[Fe-S] cluster scaffold protein] + N(6)-[(R)-dihydrolipoyl]-L-lysyl-[protein] + 4 Fe(3+) + 2 hydrogen sulfide + 2 5'-deoxyadenosine + 2 L-methionine + 2 reduced [2Fe-2S]-[ferredoxin]. It participates in protein modification; protein lipoylation via endogenous pathway; protein N(6)-(lipoyl)lysine from octanoyl-[acyl-carrier-protein]: step 2/2. Catalyzes the radical-mediated insertion of two sulfur atoms into the C-6 and C-8 positions of the octanoyl moiety bound to the lipoyl domains of lipoate-dependent enzymes, thereby converting the octanoylated domains into lipoylated derivatives. The protein is Lipoyl synthase of Xanthomonas axonopodis pv. citri (strain 306).